A 247-amino-acid chain; its full sequence is Uridylate kinase (247 aa).

15-18 (KLSG) contacts ATP. An involved in allosteric activation by GTP region spans residues 23 to 28 (GDEGFG). Position 57 (glycine 57) interacts with UMP. ATP-binding residues include glycine 58 and arginine 62. Residues aspartate 77 and 138 to 145 (TGNPFFTT) contribute to the UMP site. ATP is bound by residues threonine 165, tyrosine 171, and aspartate 174.

This sequence belongs to the UMP kinase family. Homohexamer.

Its subcellular location is the cytoplasm. It catalyses the reaction UMP + ATP = UDP + ADP. The protein operates within pyrimidine metabolism; CTP biosynthesis via de novo pathway; UDP from UMP (UMPK route): step 1/1. Its activity is regulated as follows. Allosterically activated by GTP. Inhibited by UTP. Catalyzes the reversible phosphorylation of UMP to UDP. The sequence is that of Uridylate kinase from Saccharophagus degradans (strain 2-40 / ATCC 43961 / DSM 17024).